The sequence spans 966 residues: Probable transport protein MmpL11 (966 aa).

A run of 12 helical transmembrane segments spans residues 13-33 (WLVF…AMTQ), 188-208 (IILM…IPLA), 214-234 (VVIT…SVFV), 235-255 (TSTV…FILM), 279-299 (GLAV…IYLI), 311-331 (AILA…AVLA), 373-393 (ALAA…MVLG), 527-547 (TQPL…LISI), 557-577 (VLMT…VFQW), 595-615 (VPPL…IFLL), 646-666 (AALI…PLVA), and 668-688 (IGVA…LVLV).

The protein belongs to the resistance-nodulation-cell division (RND) (TC 2.A.6) family. MmpL subfamily.

Its subcellular location is the cell membrane. This chain is Probable transport protein MmpL11 (mmpL11), found in Mycobacterium bovis (strain ATCC BAA-935 / AF2122/97).